A 3848-amino-acid chain; its full sequence is Intermembrane lipid transfer protein tipC (3848 aa).

The Chorein N-terminal domain occupies 4–112 (HIAASVLTKY…KFQDEKQAKL (109 aa)). Disordered regions lie at residues 243 to 268 (IKKE…DEIE), 450 to 481 (LKLQ…TGGG), 966 to 985 (QQLQ…SPPL), 1174 to 1219 (KNNQ…NNNS), 1326 to 1345 (ERKL…GVST), 1907 to 1926 (ENIN…TTTT), 2024 to 2047 (DDYN…NQLP), 2209 to 2290 (IKPA…NKNL), 2330 to 2353 (FNPK…SPLL), 2509 to 2541 (KQLN…NLLG), 3209 to 3228 (GITN…NNND), and 3310 to 3342 (INQQ…NTTQ). Low complexity-rich tracts occupy residues 251–260 (QQQQQQQQQG) and 452–477 (LQQQ…PSTS). The span at 1175–1190 (NNQNNNQNNNQNNNQN) shows a compositional bias: low complexity. Positions 1191–1200 (INESSPTVFI) are enriched in polar residues. Positions 1202–1211 (SPPPPPPPPL) are enriched in pro residues. The span at 1333-1345 (TSPTTPSSSGVST) shows a compositional bias: low complexity. 3 stretches are compositionally biased toward low complexity: residues 2029–2044 (DNYN…NSNN), 2217–2289 (NNNN…NNKN), and 2335–2353 (SSSS…SPLL). Low complexity-rich tracts occupy residues 3212–3228 (NDPN…NNND) and 3311–3342 (NQQP…NTTQ).

This sequence belongs to the VPS13 family.

The protein resides in the membrane. Its function is as follows. Mediates the transfer of lipids between membranes at organelle contact sites. This Dictyostelium discoideum (Social amoeba) protein is Intermembrane lipid transfer protein tipC (tipC).